The primary structure comprises 309 residues: Ribose-phosphate pyrophosphokinase (309 aa).

Residues 42 to 44 (DEE) and 102 to 103 (RQ) contribute to the ATP site. Mg(2+) contacts are provided by His136 and Asp175. Lys199 is an active-site residue. D-ribose 5-phosphate contacts are provided by residues Arg201, Asp226, and 230–234 (STGGT).

It belongs to the ribose-phosphate pyrophosphokinase family. Class III (archaeal) subfamily. It depends on Mg(2+) as a cofactor.

The protein resides in the cytoplasm. It catalyses the reaction D-ribose 5-phosphate + ATP = 5-phospho-alpha-D-ribose 1-diphosphate + AMP + H(+). The protein operates within metabolic intermediate biosynthesis; 5-phospho-alpha-D-ribose 1-diphosphate biosynthesis; 5-phospho-alpha-D-ribose 1-diphosphate from D-ribose 5-phosphate (route I): step 1/1. Its function is as follows. Involved in the biosynthesis of the central metabolite phospho-alpha-D-ribosyl-1-pyrophosphate (PRPP) via the transfer of pyrophosphoryl group from ATP to 1-hydroxyl of ribose-5-phosphate (Rib-5-P). This chain is Ribose-phosphate pyrophosphokinase, found in Aeropyrum pernix (strain ATCC 700893 / DSM 11879 / JCM 9820 / NBRC 100138 / K1).